A 269-amino-acid chain; its full sequence is Phosphonoacetaldehyde hydrolase (269 aa).

The Nucleophile role is filled by D10. Mg(2+) is bound by residues D10 and A12. Catalysis depends on K52, which acts as the Schiff-base intermediate with substrate. Position 186 (D186) interacts with Mg(2+).

Belongs to the HAD-like hydrolase superfamily. PhnX family. As to quaternary structure, homodimer. The cofactor is Mg(2+).

The catalysed reaction is phosphonoacetaldehyde + H2O = acetaldehyde + phosphate + H(+). Functionally, involved in phosphonate degradation. The sequence is that of Phosphonoacetaldehyde hydrolase from Klebsiella pneumoniae subsp. pneumoniae (strain ATCC 700721 / MGH 78578).